The primary structure comprises 126 residues: MPTINQLVRKGRRKVRTKSKSPALDGNPFRRGVCVQVMTRTPKKPNSAIRKVAKVRLTNGNEVISYIPDEGHNLQEHSIVLVRGGRVKDLPGVRYHIVRGTLDATGVEKRRRSRSKYGVKRPKAAK.

Positions 1–28 are disordered; sequence MPTINQLVRKGRRKVRTKSKSPALDGNP. Residues 9–19 show a composition bias toward basic residues; it reads RKGRRKVRTKS. Aspartate 89 carries the 3-methylthioaspartic acid modification. The segment at 106 to 126 is disordered; it reads GVEKRRRSRSKYGVKRPKAAK. Residues 109–126 show a composition bias toward basic residues; that stretch reads KRRRSRSKYGVKRPKAAK.

The protein belongs to the universal ribosomal protein uS12 family. Part of the 30S ribosomal subunit. Contacts proteins S8 and S17. May interact with IF1 in the 30S initiation complex.

In terms of biological role, with S4 and S5 plays an important role in translational accuracy. Interacts with and stabilizes bases of the 16S rRNA that are involved in tRNA selection in the A site and with the mRNA backbone. Located at the interface of the 30S and 50S subunits, it traverses the body of the 30S subunit contacting proteins on the other side and probably holding the rRNA structure together. The combined cluster of proteins S8, S12 and S17 appears to hold together the shoulder and platform of the 30S subunit. In Opitutus terrae (strain DSM 11246 / JCM 15787 / PB90-1), this protein is Small ribosomal subunit protein uS12.